A 509-amino-acid chain; its full sequence is Maturase K (509 aa).

The protein belongs to the intron maturase 2 family. MatK subfamily.

It is found in the plastid. It localises to the chloroplast. Its function is as follows. Usually encoded in the trnK tRNA gene intron. Probably assists in splicing its own and other chloroplast group II introns. In Ibicella lutea (Yellow unicorn-plant), this protein is Maturase K.